Here is a 541-residue protein sequence, read N- to C-terminus: Probable inorganic phosphate transporter 1-8 (541 aa).

Topologically, residues 1–28 (MARQEQQQHLQVLSALDAAKTQWYHFTA) are cytoplasmic. The helical transmembrane segment at 29–49 (IVVAGMGFFTDAYDLFCISLV) threads the bilayer. The Extracellular segment spans residues 50–74 (TKLLGRIYYTDLAKENPGSLPPNVA). A helical membrane pass occupies residues 75 to 95 (AAVNGVAFCGTLAGQLFFGWL). At 96–102 (GDKLGRK) the chain is on the cytoplasmic side. A helical transmembrane segment spans residues 103 to 123 (SVYGMTLLMMVICSIASGLSF). The Extracellular portion of the chain corresponds to 124 to 126 (SHT). The helical transmembrane segment at 127-147 (PTSVMATLCFFRFWLGFGIGG) threads the bilayer. Topologically, residues 148–168 (DYPLSATIMSEYANKKTRGAF) are cytoplasmic. Residues 169 to 189 (IAAVFAMQGFGILAGGIVTLI) traverse the membrane as a helical segment. Topologically, residues 190 to 215 (ISSAFRAGFPAPAYQDDRAGSTVRQA) are extracellular. The helical transmembrane segment at 216-236 (DYVWRIILMLGAMPALLTYYW) threads the bilayer. The Cytoplasmic segment spans residues 237–297 (RMKMPETARY…GLFSRQFARR (61 aa)). Residues 298–318 (HGLHLVGTATTWFLLDIAFYS) form a helical membrane-spanning segment. Over 319–353 (QNLFQKDIFTSINWIPKAKTMSALEEVFRIARAQT) the chain is Extracellular. Residues 354-374 (LIALCGTVPGYWFTVFLIDIV) traverse the membrane as a helical segment. Residues 375-376 (GR) lie on the Cytoplasmic side of the membrane. Residues 377–397 (FAIQLLGFFMMTVFMLGLAVP) traverse the membrane as a helical segment. At 398–404 (YHHWTTK) the chain is on the extracellular side. A helical membrane pass occupies residues 405–425 (GNHIGFVVMYAFTFFFANFGP). At 426–447 (NSTTFIVPAEIFPARLRSTCHG) the chain is on the cytoplasmic side. The helical transmembrane segment at 448 to 468 (ISAAAGKAGAIIGSFGFLYAA) threads the bilayer. Residues 469 to 486 (QDPHKPDAGYKPGIGVRN) lie on the Extracellular side of the membrane. Residues 487 to 507 (SLFVLAGCNLLGFICTFLVPE) form a helical membrane-spanning segment. At 508–541 (SKGKSLEEMSGEAEDDDDEVAAAGGGAAVRPQTA) the chain is on the cytoplasmic side. A disordered region spans residues 514–541 (EEMSGEAEDDDDEVAAAGGGAAVRPQTA). A compositionally biased stretch (acidic residues) spans 516 to 527 (MSGEAEDDDDEV).

This sequence belongs to the major facilitator superfamily. Phosphate:H(+) symporter (TC 2.A.1.9) family.

Its subcellular location is the membrane. High-affinity transporter for external inorganic phosphate. This Oryza sativa subsp. japonica (Rice) protein is Probable inorganic phosphate transporter 1-8 (PHT1-8).